A 103-amino-acid chain; its full sequence is MLIKTGDKVRVISGKDRGQEGTVKKVISAKNRIVVEGVNKIKKHQKPTNVNPQGGIVDIEAPIDASNVMYLDPSTNEPTRLGVRREDGKRVRYAKKSGKDLEN.

The tract at residues 70-103 (YLDPSTNEPTRLGVRREDGKRVRYAKKSGKDLEN) is disordered.

The protein belongs to the universal ribosomal protein uL24 family. Part of the 50S ribosomal subunit.

In terms of biological role, one of two assembly initiator proteins, it binds directly to the 5'-end of the 23S rRNA, where it nucleates assembly of the 50S subunit. Functionally, one of the proteins that surrounds the polypeptide exit tunnel on the outside of the subunit. The polypeptide is Large ribosomal subunit protein uL24 (Lactiplantibacillus plantarum (strain ATCC BAA-793 / NCIMB 8826 / WCFS1) (Lactobacillus plantarum)).